Consider the following 106-residue polypeptide: Iron-sulfur cluster assembly protein CyaY (106 aa).

The protein belongs to the frataxin family.

Its function is as follows. Involved in iron-sulfur (Fe-S) cluster assembly. May act as a regulator of Fe-S biogenesis. This Klebsiella pneumoniae subsp. pneumoniae (strain ATCC 700721 / MGH 78578) protein is Iron-sulfur cluster assembly protein CyaY.